Here is a 256-residue protein sequence, read N- to C-terminus: LexA repressor (256 aa).

The interval methionine 1 to proline 31 is disordered. The H-T-H motif DNA-binding region spans valine 53–lysine 73. Catalysis depends on for autocatalytic cleavage activity residues serine 180 and lysine 217.

It belongs to the peptidase S24 family. In terms of assembly, homodimer.

It carries out the reaction Hydrolysis of Ala-|-Gly bond in repressor LexA.. Represses a number of genes involved in the response to DNA damage (SOS response), including recA and lexA. In the presence of single-stranded DNA, RecA interacts with LexA causing an autocatalytic cleavage which disrupts the DNA-binding part of LexA, leading to derepression of the SOS regulon and eventually DNA repair. This is LexA repressor from Frankia casuarinae (strain DSM 45818 / CECT 9043 / HFP020203 / CcI3).